The sequence spans 330 residues: Olfactory receptor 11H6 (330 aa).

At 1-43 (MFFIIHSLVTSVFLTALGPQNRTMHFVTEFVLLGFHGQREMQS) the chain is on the extracellular side. A glycan (N-linked (GlcNAc...) asparagine) is linked at Asn21. A helical membrane pass occupies residues 44 to 64 (CFFSFILVLYLLTLLGNGAIV). Topologically, residues 65-72 (CAVKLDRR) are cytoplasmic. The helical transmembrane segment at 73 to 93 (LHTPMYILLGNFAFLEIWYIS) threads the bilayer. Residues 94 to 117 (STVPNMLVNILSEIKTISFSGCFL) lie on the Extracellular side of the membrane. Cys115 and Cys207 are disulfide-bonded. The helical transmembrane segment at 118 to 138 (QFYFFFSLGTTECFFLSVMAY) threads the bilayer. The Cytoplasmic portion of the chain corresponds to 139–157 (DRYLAICRPLHYPSIMTGK). The chain crosses the membrane as a helical span at residues 158-178 (FCIILVCVCWVGGFLCYPVPI). At 179-215 (VLISQLPFCGPNIIDHLVCDPGPLFALACISAPSTEL) the chain is on the extracellular side. Residues 216–235 (ICYTFNSMIIFGPFLSILGS) traverse the membrane as a helical segment. The Cytoplasmic portion of the chain corresponds to 236–255 (YTLVIRAVLCIPSGAGRTKA). A helical membrane pass occupies residues 256 to 276 (FSTCGSHLMVVSLFYGTLMVM). Residues 277-289 (YVSPTSGNPAGMQ) lie on the Extracellular side of the membrane. Residues 290–310 (KIITLVYTAMTPFLNPLIYSL) traverse the membrane as a helical segment. Topologically, residues 311 to 330 (RNKDMKDALKRVLGLTVSQN) are cytoplasmic.

Belongs to the G-protein coupled receptor 1 family.

It is found in the cell membrane. In terms of biological role, odorant receptor. This Homo sapiens (Human) protein is Olfactory receptor 11H6 (OR11H6).